The sequence spans 623 residues: MKCWRLSAILFLGFMLTSLSTARFVVEKNSLSVTSPEKIKGKHDSAIGNFGIPQYGGSMAGNVVYPKDNSKGCKDFDSSFKSRPGALPTILLLDRGSCFFALKVWNAQKAGASAVLVADDIEEPLITMDTPEEDVSSAKYIENITIPSALIGKSFGEKLKDAISGGDMVNVNLDWREAVPHPDDRVEYELWTNSNDECGVKCDMLIEFLKDFKGAAQILEKGGYTQFTPHYITWYCPHAFTLSKQCKSQCINHGRYCAPDPEQDFNTGYDGKDVVVENLRQLCVFKVAKETEKSWVWWDYVTDFQIRCPMKEKKYNKECANSVIKSLGLDVEKIDKCMGDPNADTENSILKEEQDAQIGKGTRGDVTILPTLVVNNRQYRGKLEKGAVLKAICSGFEETTDPAVCLSNDVETNECLTNNGGCWQDKTANIAACKDTFRGRVCECPLVDGVQFKGDGYTTCEVSGHGRCKINNGGCWHDARNGHAFSACLDDGGVKCQCPAGFKGDGVKNCEDIDECKDKKACQCPECSCKNTWGSYNCSCSGDLLYIKDQDTCISKTASQAKSTWAAFWVVLIALAMIAGGGFLVYKYRIRQYMDSEIRAIMAQYMPLDSQEEGPNHVNHQRG.

The signal sequence occupies residues 1–22 (MKCWRLSAILFLGFMLTSLSTA). Over 23–564 (RFVVEKNSLS…SKTASQAKST (542 aa)) the chain is Lumenal. Residues 54–163 (QYGGSMAGNV…SFGEKLKDAI (110 aa)) form the PA domain. Residue N143 is glycosylated (N-linked (GlcNAc...) asparagine). EGF-like domains are found at residues 411-461 (ETNE…TTCE) and 464-511 (GHGR…KNCE). Cystine bridges form between C415–C433, C422–C442, C444–C460, C468–C488, C475–C496, and C498–C510. One can recognise an EGF-like 3; calcium-binding domain in the interval 512 to 554 (DIDECKDKKACQCPECSCKNTWGSYNCSCSGDLLYIKDQDTCI). N537 carries an N-linked (GlcNAc...) asparagine glycan. An intrachain disulfide couples C540 to C553. Residues 565–585 (WAAFWVVLIALAMIAGGGFLV) form a helical membrane-spanning segment. At 586-623 (YKYRIRQYMDSEIRAIMAQYMPLDSQEEGPNHVNHQRG) the chain is on the cytoplasmic side. Positions 605-608 (YMPL) match the Tyrosine-based internalization motif motif.

It belongs to the VSR (BP-80) family. As to quaternary structure, interacts with the N-terminal propeptide of aleurein (proaleurein).

The protein localises to the membrane. The protein resides in the golgi apparatus membrane. It localises to the cytoplasmic vesicle. It is found in the clathrin-coated vesicle membrane. Its subcellular location is the prevacuolar compartment membrane. Functionally, vacuolar-sorting receptor (VSR) involved in clathrin-coated vesicles sorting from Golgi apparatus to vacuoles. Seems to binds preferentially proteins containing a N-terminal NPIR motif. This Pisum sativum (Garden pea) protein is Vacuolar-sorting receptor 1 (BP80).